We begin with the raw amino-acid sequence, 388 residues long: Succinate--CoA ligase [ADP-forming] subunit beta (388 aa).

An ATP-grasp domain is found at Lys-9–His-244. ATP contacts are provided by residues Lys-46, Gly-53–Gly-55, Glu-99, Thr-102, and Glu-107. Mg(2+) is bound by residues Asn-199 and Asp-213. Substrate-binding positions include Asn-264 and Gly-321 to Val-323.

Belongs to the succinate/malate CoA ligase beta subunit family. In terms of assembly, heterotetramer of two alpha and two beta subunits. Requires Mg(2+) as cofactor.

The enzyme catalyses succinate + ATP + CoA = succinyl-CoA + ADP + phosphate. It catalyses the reaction GTP + succinate + CoA = succinyl-CoA + GDP + phosphate. The protein operates within carbohydrate metabolism; tricarboxylic acid cycle; succinate from succinyl-CoA (ligase route): step 1/1. Functionally, succinyl-CoA synthetase functions in the citric acid cycle (TCA), coupling the hydrolysis of succinyl-CoA to the synthesis of either ATP or GTP and thus represents the only step of substrate-level phosphorylation in the TCA. The beta subunit provides nucleotide specificity of the enzyme and binds the substrate succinate, while the binding sites for coenzyme A and phosphate are found in the alpha subunit. This Shewanella loihica (strain ATCC BAA-1088 / PV-4) protein is Succinate--CoA ligase [ADP-forming] subunit beta.